An 81-amino-acid polypeptide reads, in one-letter code: Small ribosomal subunit protein bS18 (81 aa).

This sequence belongs to the bacterial ribosomal protein bS18 family. Part of the 30S ribosomal subunit. Forms a tight heterodimer with protein bS6.

Functionally, binds as a heterodimer with protein bS6 to the central domain of the 16S rRNA, where it helps stabilize the platform of the 30S subunit. This Lactococcus lactis subsp. cremoris (strain MG1363) protein is Small ribosomal subunit protein bS18.